A 502-amino-acid polypeptide reads, in one-letter code: Lysine--tRNA ligase (502 aa).

Glu413 and Glu420 together coordinate Mg(2+).

Belongs to the class-II aminoacyl-tRNA synthetase family. In terms of assembly, homodimer. Mg(2+) serves as cofactor.

It is found in the cytoplasm. The enzyme catalyses tRNA(Lys) + L-lysine + ATP = L-lysyl-tRNA(Lys) + AMP + diphosphate. This chain is Lysine--tRNA ligase, found in Aromatoleum aromaticum (strain DSM 19018 / LMG 30748 / EbN1) (Azoarcus sp. (strain EbN1)).